The primary structure comprises 391 residues: uncharacterized protein (391 aa).

The N-terminal stretch at 1 to 20 is a signal peptide; the sequence is MRKLFLLSILMIGVIVAFAG. The S-archaeol cysteine moiety is linked to residue Cys-21. The 274-residue stretch at 104–377 folds into the Fe/B12 periplasmic-binding domain; that stretch reads RIVTDFYCPI…DFAKMIHPEL (274 aa).

The protein localises to the cell membrane. This is an uncharacterized protein from Methanocaldococcus jannaschii (strain ATCC 43067 / DSM 2661 / JAL-1 / JCM 10045 / NBRC 100440) (Methanococcus jannaschii).